We begin with the raw amino-acid sequence, 659 residues long: Interferon-induced GTP-binding protein Mx3 (659 aa).

One can recognise a Dynamin-type G domain in the interval 65–338; the sequence is DLALPAIAVI…LISHICKSLP (274 aa). Residues 75–82 are G1 motif; it reads GDQSSGKS. 75 to 82 is a binding site for GTP; that stretch reads GDQSSGKS. The interval 100–102 is G2 motif; that stretch reads VTR. The segment at 176-179 is G3 motif; it reads DLPG. Residues 176–180 and 245–248 contribute to the GTP site; these read DLPGI and TKPD. The tract at residues 245–248 is G4 motif; the sequence is TKPD. The tract at residues 277 to 280 is G5 motif; that stretch reads KCRG. The tract at residues 547 to 568 is disordered; it reads EAEEEERKHGKSRSAQSPNLQT. Residues 559 to 568 are compositionally biased toward polar residues; it reads RSAQSPNLQT. The region spanning 571-659 is the GED domain; that stretch reads MDEIFQHLNA…AQRRLAKFPG (89 aa).

This sequence belongs to the TRAFAC class dynamin-like GTPase superfamily. Dynamin/Fzo/YdjA family.

It localises to the cytoplasm. Does not show activity against influenza virus or VSV; although it only differs from Mx2 by 8 positions. The sequence is that of Interferon-induced GTP-binding protein Mx3 (Mx3) from Rattus norvegicus (Rat).